The primary structure comprises 317 residues: Thymidylate synthase (317 aa).

Residues arginine 40 and 167 to 168 each bind dUMP; that span reads RR. Cysteine 187 (nucleophile) is an active-site residue. Residues 216-219, asparagine 227, and 257-259 each bind dUMP; these read RSCD and HVY. Residue aspartate 219 coordinates (6R)-5,10-methylene-5,6,7,8-tetrahydrofolate.

This sequence belongs to the thymidylate synthase family. Homodimer.

It catalyses the reaction dUMP + (6R)-5,10-methylene-5,6,7,8-tetrahydrofolate = 7,8-dihydrofolate + dTMP. The protein operates within pyrimidine metabolism; dTTP biosynthesis. This chain is Thymidylate synthase (TMP1), found in Cryptococcus neoformans var. neoformans serotype D (strain B-3501A) (Filobasidiella neoformans).